Here is a 190-residue protein sequence, read N- to C-terminus: Small ribosomal subunit protein uS4c (190 aa).

The region spanning 92 to 152 (RLDHVVYRAG…KSPSSAQLPP (61 aa)) is the S4 RNA-binding domain.

It belongs to the universal ribosomal protein uS4 family. As to quaternary structure, part of the 30S ribosomal subunit. Contacts protein S5. The interaction surface between S4 and S5 is involved in control of translational fidelity.

Its subcellular location is the plastid. It localises to the chloroplast. Functionally, one of the primary rRNA binding proteins, it binds directly to 16S rRNA where it nucleates assembly of the body of the 30S subunit. In terms of biological role, with S5 and S12 plays an important role in translational accuracy. The chain is Small ribosomal subunit protein uS4c (rps4) from Cyanidioschyzon merolae (strain NIES-3377 / 10D) (Unicellular red alga).